Consider the following 241-residue polypeptide: Ribose-5-phosphate isomerase A (241 aa).

Substrate is bound by residues 28–31, 83–86, and 96–99; these read TGST, DGAD, and KGGG. Glutamate 105 acts as the Proton acceptor in catalysis. Position 123 (lysine 123) interacts with substrate.

This sequence belongs to the ribose 5-phosphate isomerase family. Homodimer.

The catalysed reaction is aldehydo-D-ribose 5-phosphate = D-ribulose 5-phosphate. The protein operates within carbohydrate degradation; pentose phosphate pathway; D-ribose 5-phosphate from D-ribulose 5-phosphate (non-oxidative stage): step 1/1. Catalyzes the reversible conversion of ribose-5-phosphate to ribulose 5-phosphate. This chain is Ribose-5-phosphate isomerase A, found in Bradyrhizobium diazoefficiens (strain JCM 10833 / BCRC 13528 / IAM 13628 / NBRC 14792 / USDA 110).